Here is a 76-residue protein sequence, read N- to C-terminus: Alpha/kappa-conotoxin-like pl14.1 (76 aa).

The N-terminal stretch at 1 to 27 is a signal peptide; that stretch reads MPSVRSVTCCCLLWMMLSVQLVTPGSP. Positions 28 to 39 are excised as a propeptide; it reads ATAQLSGQRTAR. 2 cysteine pairs are disulfide-bonded: Cys-46/Cys-61 and Cys-50/Cys-63. Asn-64 carries the post-translational modification Asparagine amide. The propeptide occupies 65-76; it reads GKRDVVSSSMAV.

The protein belongs to the conotoxin J superfamily. Expressed by the venom duct.

Its subcellular location is the secreted. Functionally, highly inhibits both nicotinic acetylcholine receptors (neuronal (alpha-3/beta-4) and muscular (alpha-1/beta-1/epsilon/delta) subtypes) and the voltage-gated potassium channel Kv1.6/KCNA6 subtype. This Conus planorbis (Planorbis cone) protein is Alpha/kappa-conotoxin-like pl14.1.